The sequence spans 215 residues: UPF0441 protein SG0265 (215 aa).

It belongs to the UPF0441 family.

The sequence is that of UPF0441 protein SG0265 from Sodalis glossinidius (strain morsitans).